Consider the following 164-residue polypeptide: UPF0114 protein YqhA (164 aa).

Helical transmembrane passes span 15–35 (LLAP…LKFF), 53–73 (LILV…LVMV), and 136–156 (LMWY…MGYL).

This sequence belongs to the UPF0114 family.

It is found in the cell membrane. The chain is UPF0114 protein YqhA from Shigella dysenteriae serotype 1 (strain Sd197).